A 538-amino-acid chain; its full sequence is Sodium/hydrogen exchanger 1 (538 aa).

The Cytoplasmic segment spans residues 1–19 (MLDSLVSKLPSLSTSDHAS). Residues 20–40 (VVALNLFVALLCACIVLGHLL) traverse the membrane as a helical segment. Residues 41–45 (EENRW) lie on the Vacuolar side of the membrane. The helical transmembrane segment at 46–66 (MNESITALLIGLGTGVTILLI) threads the bilayer. Residues 67–73 (SKGKSSH) are Cytoplasmic-facing. Positions 74-94 (LLVFSEDLFFIYLLPPIIFNA) form an intramembrane region, helical. The Cytoplasmic portion of the chain corresponds to 95–106 (GFQVKKKQFFRN). Residues 107 to 127 (FVTIMLFGAVGTIISCTIISL) form a helical membrane-spanning segment. The Vacuolar segment spans residues 128–146 (GVTQFFKKLDIGTFDLGDY). 2 intramembrane regions (helical) span residues 147–166 (LAIG…QVLN) and 172–192 (LLYS…VVVF). Topologically, residues 193–216 (NAIQSFDLTHLNHEAAFHLLGNFL) are vacuolar. Residues 217 to 237 (YLFLLSTLLGAATGLISAYVI) form a helical membrane-spanning segment. The Cytoplasmic segment spans residues 238-262 (KKLYFGRHSTDREVALMMLMAYLSY). The chain crosses the membrane as a helical span at residues 263 to 283 (MLAELFDLSGILTVFFCGIVM). Residues 284–302 (SHYTWHNVTESSRITTKHT) are Vacuolar-facing. N-linked (GlcNAc...) asparagine glycosylation is present at N290. The helical transmembrane segment at 303–323 (FATLSFLAETFIFLYVGMDAL) threads the bilayer. Over 324–342 (DIDKWRSVSDTPGTSIAVS) the chain is Cytoplasmic. Residues 343–363 (SILMGLVMVGRAAFVFPLSFL) traverse the membrane as a helical segment. The Vacuolar portion of the chain corresponds to 364–378 (SNLAKKNQSEKINFN). N370 carries an N-linked (GlcNAc...) asparagine glycan. The chain crosses the membrane as a helical span at residues 379–399 (MQVVIWWSGLMRGAVSMALAY). Residues 400–413 (NKFTRAGHTDVRGN) are Cytoplasmic-facing. Residues 414 to 434 (AIMITSTITVCLFSTVVFGML) traverse the membrane as a helical segment. The Vacuolar portion of the chain corresponds to 435 to 538 (TKPLISYLLP…ERNPPDLSKA (104 aa)). N-linked (GlcNAc...) asparagine glycosylation occurs at N447. The interval 496–518 (RTVHYYWRQFDDSFMRPVFGGRG) is interaction with CML18/CAM15.

The protein belongs to the monovalent cation:proton antiporter 1 (CPA1) transporter (TC 2.A.36) family. As to quaternary structure, calcium and pH-dependent interaction with CML18/CAM15 (increases when pH decreases, better at pH 5.5 than at pH 7.5). As to expression, ubiquitous, with higher levels around vascular tissues and guard cells.

The protein localises to the vacuole membrane. The protein resides in the endoplasmic reticulum membrane. It localises to the golgi apparatus membrane. The catalysed reaction is Na(+)(in) + H(+)(out) = Na(+)(out) + H(+)(in). It carries out the reaction K(+)(in) + H(+)(out) = K(+)(out) + H(+)(in). Acts in low affinity electroneutral exchange of protons for cations such as Na(+) or K(+) across membranes. Can also exchange Li(+) and Cs(+) with a lower affinity. Involved in vacuolar ion compartmentalization necessary for cell volume regulation and cytoplasmic Na(+) detoxification. Required during leaves expansion, probably to stimulate epidermal cell expansion. Confers competence to grow in high salinity conditions. This chain is Sodium/hydrogen exchanger 1 (NHX1), found in Arabidopsis thaliana (Mouse-ear cress).